We begin with the raw amino-acid sequence, 230 residues long: Protein STK_02290 (230 aa).

Residues 15 to 213 form the AMMECR1 domain; it reads NLGKVLIKIA…EEKPKSEKIL (199 aa).

The protein is Protein STK_02290 of Sulfurisphaera tokodaii (strain DSM 16993 / JCM 10545 / NBRC 100140 / 7) (Sulfolobus tokodaii).